The sequence spans 222 residues: Octanoyltransferase (222 aa).

The 181-residue stretch at 34-214 (AEAPSTVLLL…EFRKHEEALV (181 aa)) folds into the BPL/LPL catalytic domain. Residues 72-79 (RGGKLTWH), 144-146 (AIG), and 157-159 (GIA) each bind substrate. Cys175 acts as the Acyl-thioester intermediate in catalysis.

The protein belongs to the LipB family.

It localises to the cytoplasm. The enzyme catalyses octanoyl-[ACP] + L-lysyl-[protein] = N(6)-octanoyl-L-lysyl-[protein] + holo-[ACP] + H(+). Its pathway is protein modification; protein lipoylation via endogenous pathway; protein N(6)-(lipoyl)lysine from octanoyl-[acyl-carrier-protein]: step 1/2. In terms of biological role, catalyzes the transfer of endogenously produced octanoic acid from octanoyl-acyl-carrier-protein onto the lipoyl domains of lipoate-dependent enzymes. Lipoyl-ACP can also act as a substrate although octanoyl-ACP is likely to be the physiological substrate. This Arthrobacter sp. (strain FB24) protein is Octanoyltransferase.